A 90-amino-acid polypeptide reads, in one-letter code: Putative membrane protein insertion efficiency factor (90 aa).

Belongs to the UPF0161 family.

It is found in the cell membrane. Its function is as follows. Could be involved in insertion of integral membrane proteins into the membrane. The polypeptide is Putative membrane protein insertion efficiency factor (Oceanobacillus iheyensis (strain DSM 14371 / CIP 107618 / JCM 11309 / KCTC 3954 / HTE831)).